We begin with the raw amino-acid sequence, 41 residues long: Bacteriocin (41 aa).

A disulfide bridge links Cys9 with Cys14.

The protein localises to the secreted. In terms of biological role, bacteriocin active against S.aureus, S.typhi, B.thuringiensis, Klebsiella sp., E.coli KL16 and E.coli Gj137. The polypeptide is Bacteriocin (Lactococcus sp).